A 200-amino-acid polypeptide reads, in one-letter code: Small ribosomal subunit protein uS4 (200 aa).

The segment covering 1–13 has biased composition (basic residues); that stretch reads MARYRGPKQKIAR. The disordered stretch occupies residues 1–44; it reads MARYRGPKQKIARRFKEPIFGPSKALERKPYPPGQHGQSRRRRE. The region spanning 92–154 is the S4 RNA-binding domain; sequence ARLDNTVFRM…SQDLEVIQTN (63 aa).

The protein belongs to the universal ribosomal protein uS4 family. In terms of assembly, part of the 30S ribosomal subunit. Contacts protein S5. The interaction surface between S4 and S5 is involved in control of translational fidelity.

One of the primary rRNA binding proteins, it binds directly to 16S rRNA where it nucleates assembly of the body of the 30S subunit. Functionally, with S5 and S12 plays an important role in translational accuracy. The protein is Small ribosomal subunit protein uS4 of Salinibacter ruber (strain DSM 13855 / M31).